Here is a 199-residue protein sequence, read N- to C-terminus: NAD(P)H dehydrogenase (quinone) (199 aa).

The region spanning 4–190 (ILVLYYSTYG…DGARFQGRHV (187 aa)) is the Flavodoxin-like domain. Residues 10–15 (STYGHI) and 78–80 (TRF) contribute to the FMN site. Residue tyrosine 12 coordinates NAD(+). Tryptophan 98 provides a ligand contact to substrate. FMN is bound by residues 113 to 119 (STATQHG) and histidine 134.

This sequence belongs to the WrbA family. FMN is required as a cofactor.

The enzyme catalyses a quinone + NADH + H(+) = a quinol + NAD(+). It catalyses the reaction a quinone + NADPH + H(+) = a quinol + NADP(+). The sequence is that of NAD(P)H dehydrogenase (quinone) from Rhizorhabdus wittichii (strain DSM 6014 / CCUG 31198 / JCM 15750 / NBRC 105917 / EY 4224 / RW1) (Sphingomonas wittichii).